The following is a 584-amino-acid chain: Kelch domain-containing protein 4 (584 aa).

The segment covering 1-10 (MGKKGKKEKK) has biased composition (basic residues). Disordered regions lie at residues 1 to 33 (MGKKGKKEKKGRGAEKTAAKMEKKVSKRSRKEE) and 50 to 69 (KTQVTETPCPPPSPRLNASL). Residues 11-24 (GRGAEKTAAKMEKK) are compositionally biased toward basic and acidic residues. Kelch repeat units lie at residues 77-129 (ELIL…VVPQ), 133-187 (QLWV…AWKR), 188-238 (QLIL…LMAV), 243-289 (SIAI…INPS), and 308-361 (QILV…RRGK). Disordered stretches follow at residues 348-381 (KGPKSEKKKRRRGKAEDPEGTTEQETGGSSAPEP), 405-433 (SGLGVQPSPKADDSASEASSTGQEPCPRS), and 482-533 (PKSQ…EQFE). The residue at position 418 (S418) is a Phosphoserine. The Kelch 6 repeat unit spans residues 443–494 (LLYVYGGMFEAGDRQVTLSDLYCLDLHKMEEWKTLVEMDPKSQEWLEESDSE). Residues 487–519 (WLEESDSEEDSSSDEESEDGEDKDQEDSAEEGA) are compositionally biased toward acidic residues. Residues 520-533 (DPQHPEVARGEQFE) show a composition bias toward basic and acidic residues.

The chain is Kelch domain-containing protein 4 (Klhdc4) from Mus musculus (Mouse).